The chain runs to 336 residues: Fructose-1,6-bisphosphatase class 1 (336 aa).

Mg(2+)-binding residues include E92, D115, L117, and D118. Substrate-binding positions include 118–121 (DGSS), N211, Y244, 262–264 (YLY), and K274. Mg(2+) is bound at residue E280.

It belongs to the FBPase class 1 family. As to quaternary structure, homotetramer. It depends on Mg(2+) as a cofactor.

The protein resides in the cytoplasm. It carries out the reaction beta-D-fructose 1,6-bisphosphate + H2O = beta-D-fructose 6-phosphate + phosphate. It functions in the pathway carbohydrate biosynthesis; gluconeogenesis. In Aliivibrio salmonicida (strain LFI1238) (Vibrio salmonicida (strain LFI1238)), this protein is Fructose-1,6-bisphosphatase class 1.